The sequence spans 86 residues: Small ribosomal subunit protein bS20 (86 aa).

The segment at 1-26 (MANIKSAKKRAITSEKRRQHNASRRS) is disordered.

It belongs to the bacterial ribosomal protein bS20 family.

In terms of biological role, binds directly to 16S ribosomal RNA. The polypeptide is Small ribosomal subunit protein bS20 (Photobacterium profundum (strain SS9)).